Reading from the N-terminus, the 394-residue chain is Acetate kinase (394 aa).

Asn-10 provides a ligand contact to Mg(2+). Residue Lys-17 participates in ATP binding. Arg-87 serves as a coordination point for substrate. The Proton donor/acceptor role is filled by Asp-144. ATP is bound by residues 204-208, 279-281, and 327-331; these read HLGNG, DMR, and GIGEN. A Mg(2+)-binding site is contributed by Glu-381.

It belongs to the acetokinase family. As to quaternary structure, homodimer. Mg(2+) serves as cofactor. It depends on Mn(2+) as a cofactor.

The protein resides in the cytoplasm. The catalysed reaction is acetate + ATP = acetyl phosphate + ADP. Its pathway is metabolic intermediate biosynthesis; acetyl-CoA biosynthesis; acetyl-CoA from acetate: step 1/2. Catalyzes the formation of acetyl phosphate from acetate and ATP. Can also catalyze the reverse reaction. This Ectopseudomonas mendocina (strain ymp) (Pseudomonas mendocina) protein is Acetate kinase.